The chain runs to 233 residues: Large ribosomal subunit protein uL1 (233 aa).

The protein belongs to the universal ribosomal protein uL1 family. As to quaternary structure, part of the 50S ribosomal subunit.

Binds directly to 23S rRNA. The L1 stalk is quite mobile in the ribosome, and is involved in E site tRNA release. Its function is as follows. Protein L1 is also a translational repressor protein, it controls the translation of the L11 operon by binding to its mRNA. The protein is Large ribosomal subunit protein uL1 of Shewanella oneidensis (strain ATCC 700550 / JCM 31522 / CIP 106686 / LMG 19005 / NCIMB 14063 / MR-1).